A 152-amino-acid chain; its full sequence is Deoxyuridine 5'-triphosphate nucleotidohydrolase (152 aa).

Residues 71-73 (RSG), Asn-84, 88-90 (LID), and Met-98 contribute to the substrate site.

Belongs to the dUTPase family. Mg(2+) is required as a cofactor.

It carries out the reaction dUTP + H2O = dUMP + diphosphate + H(+). Its pathway is pyrimidine metabolism; dUMP biosynthesis; dUMP from dCTP (dUTP route): step 2/2. In terms of biological role, this enzyme is involved in nucleotide metabolism: it produces dUMP, the immediate precursor of thymidine nucleotides and it decreases the intracellular concentration of dUTP so that uracil cannot be incorporated into DNA. This is Deoxyuridine 5'-triphosphate nucleotidohydrolase from Photorhabdus laumondii subsp. laumondii (strain DSM 15139 / CIP 105565 / TT01) (Photorhabdus luminescens subsp. laumondii).